Reading from the N-terminus, the 258-residue chain is MNKLALQGPLWLASDLHLGPATPATAEAFLGLLQAAADEASALLLPGDIFDAWIGDDVIRAAPPWLAAVLHGIRAAAGRIPVYLGRGNRDFLIGQELADALGAHLLPEPVLLETDYGRILLTHGDEYCTDDSAYQQFRAMVRNPQWQAQFLAKSIPERLAMAEQARGESQAANQAKSMEIMDVNPAAVEAALREADVDVLVHGHTHRPARHVLSVDGRKRERWVLPDWDCDHADPPRGGWLVIDRDGLQCFDLVEDED.

Mn(2+)-binding residues include Asp15, His17, Asp48, Asn88, and His123. 88–89 is a binding site for substrate; it reads NR. The substrate site is built by Asp131, Ser169, Asn173, Lys176, and His204. Residues His204 and His206 each coordinate Mn(2+).

The protein belongs to the LpxH family. Mn(2+) is required as a cofactor.

It localises to the cell inner membrane. The catalysed reaction is UDP-2-N,3-O-bis[(3R)-3-hydroxytetradecanoyl]-alpha-D-glucosamine + H2O = 2-N,3-O-bis[(3R)-3-hydroxytetradecanoyl]-alpha-D-glucosaminyl 1-phosphate + UMP + 2 H(+). It functions in the pathway glycolipid biosynthesis; lipid IV(A) biosynthesis; lipid IV(A) from (3R)-3-hydroxytetradecanoyl-[acyl-carrier-protein] and UDP-N-acetyl-alpha-D-glucosamine: step 4/6. Hydrolyzes the pyrophosphate bond of UDP-2,3-diacylglucosamine to yield 2,3-diacylglucosamine 1-phosphate (lipid X) and UMP by catalyzing the attack of water at the alpha-P atom. Involved in the biosynthesis of lipid A, a phosphorylated glycolipid that anchors the lipopolysaccharide to the outer membrane of the cell. This is UDP-2,3-diacylglucosamine hydrolase from Bordetella pertussis (strain Tohama I / ATCC BAA-589 / NCTC 13251).